Here is a 313-residue protein sequence, read N- to C-terminus: 3-O-acetylpapaveroxine carboxylesterase CXE2 (313 aa).

Positions 72 to 74 match the Involved in the stabilization of the negatively charged intermediate by the formation of the oxyanion hole motif; it reads HGG. Residues Ser158, Asp262, and His292 contribute to the active site.

Belongs to the 'GDXG' lipolytic enzyme family.

It catalyses the reaction 3-O-acetylpapaveroxine + H2O = narcotine hemiacetal + acetate + H(+). It functions in the pathway alkaloid biosynthesis. Functionally, carboxylesterase involved in the biosynthesis of the benzylisoquinoline alkaloid noscapine. Converts 3-O-acetylpapaveroxine to narcotine hemiacetal. This Papaver somniferum (Opium poppy) protein is 3-O-acetylpapaveroxine carboxylesterase CXE2.